Reading from the N-terminus, the 199-residue chain is N-(5'-phosphoribosyl)anthranilate isomerase (199 aa).

The protein belongs to the TrpF family.

It carries out the reaction N-(5-phospho-beta-D-ribosyl)anthranilate = 1-(2-carboxyphenylamino)-1-deoxy-D-ribulose 5-phosphate. It functions in the pathway amino-acid biosynthesis; L-tryptophan biosynthesis; L-tryptophan from chorismate: step 3/5. This chain is N-(5'-phosphoribosyl)anthranilate isomerase, found in Campylobacter jejuni subsp. jejuni serotype O:2 (strain ATCC 700819 / NCTC 11168).